We begin with the raw amino-acid sequence, 86 residues long: Large ribosomal subunit protein bL27 (86 aa).

The segment at 1–22 is disordered; the sequence is MAHKKAGGSSRNGRDSESKRLG.

Belongs to the bacterial ribosomal protein bL27 family.

The protein is Large ribosomal subunit protein bL27 of Acidithiobacillus ferrooxidans (strain ATCC 23270 / DSM 14882 / CIP 104768 / NCIMB 8455) (Ferrobacillus ferrooxidans (strain ATCC 23270)).